Consider the following 301-residue polypeptide: MKKVKVCSPGTSANLGPGYDIFGLALSKPYDILEVEKTEKGIIISVEGEKAEEIPTNVDENTAGVVAKKMMEDFNIQSGIHIHINKGIKPGSGLGSSSASCAGVAFALNELFELKLSKLELVKYSSLGEAVAAGAPHADNVAPAIFGGFTLTTSYDPLEVLHIPVDIEVLVALPNIQVSTKTAREILPKEIPIKYMVNNVGKAAGMVYALYNNDLELFGRYMSKDCVVEPCRANLIDGYAEVKEKVKDLVYGITISGSGPAIITIPKKEHVIDIENIFKEVWNCPVYYTKVGPGCYVEEIE.

89–99 (KPGSGLGSSSA) is an ATP binding site.

The protein belongs to the GHMP kinase family. Homoserine kinase subfamily.

It localises to the cytoplasm. The enzyme catalyses L-homoserine + ATP = O-phospho-L-homoserine + ADP + H(+). It participates in amino-acid biosynthesis; L-threonine biosynthesis; L-threonine from L-aspartate: step 4/5. In terms of biological role, catalyzes the ATP-dependent phosphorylation of L-homoserine to L-homoserine phosphate. The polypeptide is Homoserine kinase (Methanococcus maripaludis (strain C5 / ATCC BAA-1333)).